We begin with the raw amino-acid sequence, 453 residues long: Serine/threonine-protein phosphatase 2A regulatory subunit B'' subunit gamma (453 aa).

The tract at residues 1-27 (MDWKDVLRRRLASPNSDPKRKKSEQEL) is disordered. EF-hand domains lie at 273–308 (PSALRVYGQYLNLDKDHNGMLSKEELSRYGTATMTN) and 341–376 (KEPAALQYIFKLLDIENKGYLNVFSLNYFFRAIQEL). 5 residues coordinate Ca(2+): Asp286, Asp288, Asn290, Met292, and Glu297.

Interacts with MCM3AP/GANP, PPP5C, and the phosphatase 2A core enzyme composed of the PPP2CA catalytic subunit and the constant regulatory subunit PPP2R1A. Finds in a complex with ABCB1, TFPI2 and PPP2R3C; leading to the dephosphorylation of ABCB1.

Its subcellular location is the nucleus. It is found in the cytoplasm. Its function is as follows. May regulate MCM3AP phosphorylation through phosphatase recruitment. May act as a negative regulator of ABCB1 expression and function through the dephosphorylation of ABCB1 by TFPI2/PPP2R3C complex. May play a role in the activation-induced cell death of B-cells. The polypeptide is Serine/threonine-protein phosphatase 2A regulatory subunit B'' subunit gamma (Ppp2r3c) (Rattus norvegicus (Rat)).